The following is a 233-amino-acid chain: Aquaglyceroporin AqpS (233 aa).

Helical transmembrane passes span 11–31 (VAEA…GIMA) and 40–60 (LALV…VTIL). The NPA 1 signature appears at 69 to 71 (NPA). 3 helical membrane-spanning segments follow: residues 89–109 (AYVI…HLMF), 125–145 (AQWL…LAGI), and 152–172 (VPWL…STSF). An NPA 2 motif is present at residues 174–176 (NPA). The chain crosses the membrane as a helical span at residues 193-213 (GDLPGFVIAELLGAVCALALM).

It belongs to the MIP/aquaporin (TC 1.A.8) family. NIP (TC 1.A.8.12) subfamily.

The protein localises to the cell inner membrane. Functionally, involved in resistance to arsenic. Facilitates efflux of arsenite [As(III)]. Arsenate [As(V)] enters the cell through phosphate transport systems and is reduced to arsenite by the arsenate reductase ArsC. Internally generated arsenite flows out of the cell by downhill movement through AqpS. Can also transport the highly toxic methylarsenite [MAs(III)] and the relatively non-toxic methylarsenate [MAs(V)]. May be a component of an methylarsenite resistance pathway in which methylarsenite enters cells via AqpS, is oxidized by ArsH to methylarsenate, which exits the cells via AqpS. This pathway may confer a selective advantage for R.melliloti to grow in the presence of environmental methylarsenicals. The sequence is that of Aquaglyceroporin AqpS from Rhizobium meliloti (strain 1021) (Ensifer meliloti).